The primary structure comprises 83 residues: Kappa-theraphotoxin-Cg2a (83 aa).

Positions 1-21 are cleaved as a signal peptide; that stretch reads MKGSAFAIILGLVVLCACSFA. Positions 22–53 are excised as a propeptide; it reads EDEQDQFASPNELLRSMFLESRHELIPEVEGR. Intrachain disulfides connect C55/C69, C62/C74, and C68/C78. Residue L82 is modified to Leucine amide.

Belongs to the neurotoxin 30 (phrixotoxin) family. In terms of tissue distribution, expressed by the venom gland.

The protein resides in the secreted. Inhibits voltage-gated potassium channels of the subtype Kv4.1/KCND1 with high affinity and shows weak effects on Kv4.2/KCND2 and Kv2.1/KCNB1 subtypes. The toxin modifies the gating behavior of the channel and may interact with the S3-S4 extracellular loop. This Chilobrachys guangxiensis (Chinese earth tiger tarantula) protein is Kappa-theraphotoxin-Cg2a.